The sequence spans 348 residues: Replication-associated protein (348 aa).

The span at 1–17 (MRAPASSAASNRPGPSN) shows a compositional bias: low complexity. Residues 1–22 (MRAPASSAASNRPGPSNHPTPR) are disordered. Residues 22–125 (RWNSKQFFLT…NGDSDEMGEL (104 aa)) enclose the CRESS-DNA virus Rep endonuclease domain. The RCR-1 signature appears at 29-32 (FLTY). Positions 63, 71, and 73 each coordinate a divalent metal cation. The RCR-2 motif lies at 71–73 (HLH). The active-site For DNA cleavage activity is Y111. Positions 111-114 (YISK) match the RCR-3 motif. Residues 176-188 (SAAALFTEPPPVY) form an oligomerization region. 228 to 235 (GPSRTGKT) contacts ATP. Residues 251-269 (VDFTHYDKDAIYNVIDDVP) form a transactivation region. The short motif at 291-301 (KYGKKKKIPGG) is the Nuclear localization signal element.

Belongs to the geminiviridae Rep protein family. Homooligomer. Rep binds to repeated DNA motifs (iterons). Forms the O-complex, which is a Rep-DNA complex involved in the initiation of RCR. Part of the C- and V-complexes which are RepA-Rep-DNA complexes involved in the c-sense and v-sense transcription. The cofactor is Mg(2+). Requires Mn(2+) as cofactor.

Its subcellular location is the host nucleus. Its function is as follows. Essential for the replication of viral ssDNA. The closed circular ssDNA genome is first converted to a superhelical dsDNA. Rep binds a specific region at the genome origin of replication. It introduces an endonucleolytic nick within the conserved sequence 5'-TAATATTAC-3' in the intergenic region of the genome present in all geminiviruses, thereby initiating the rolling circle replication (RCR). Following cleavage, binds covalently to the 5'-phosphate of DNA as a tyrosyl ester. The cleavage gives rise to a free 3'-OH that serves as a primer for the cellular DNA polymerase. The polymerase synthesizes the (+) strand DNA by rolling circle mechanism. After one round of replication, a Rep-catalyzed nucleotidyl transfer reaction releases a circular single-stranded virus genome, thereby terminating the replication. Displays origin-specific DNA cleavage, nucleotidyl transferase, ATPase and helicase activities. Acts as an inhibitor of C-sense gene transcription. The polypeptide is Replication-associated protein (Miscanthus streak virus (isolate 91) (MiSV)).